The primary structure comprises 151 residues: Inorganic triphosphatase (151 aa).

The region spanning 1-148 (MTEIERKFLV…KRYKNKALAL (148 aa)) is the CYTH domain. Tyr-27 (proton acceptor) is an active-site residue.

Homodimer.

The enzyme catalyses triphosphate + H2O = phosphate + diphosphate. Activated by magnesium and mangenese ions, and inhibited by calcium, zinc and copper ions. Functionally, involved in the hydrolysis of the beta-gamma-phosphoanhydride linkage of triphosphate-containing substrates (inorganic or nucleoside-linked). Catalyzes the hydrolysis of inorganic triphosphate (PPPi). The enzyme has a strong preference for linear PPPi compared with cyclic PPPi (cyclic trimetaphosphate) and to the linear P4. The longer chains polyphosphate are not hydrolyzed. It has only a slight thiamine triphosphatase (ThTPase) activity. Nucleoside triphosphatase activity is negligible in the presence of magnesium, but a small activity is observed in the presence of manganese, in particular with GTP. In Nitrosomonas europaea (strain ATCC 19718 / CIP 103999 / KCTC 2705 / NBRC 14298), this protein is Inorganic triphosphatase.